The following is a 94-amino-acid chain: Integration host factor subunit beta (94 aa).

Belongs to the bacterial histone-like protein family. In terms of assembly, heterodimer of an alpha and a beta chain.

Its function is as follows. This protein is one of the two subunits of integration host factor, a specific DNA-binding protein that functions in genetic recombination as well as in transcriptional and translational control. This is Integration host factor subunit beta from Mannheimia succiniciproducens (strain KCTC 0769BP / MBEL55E).